The primary structure comprises 130 residues: UPF0102 protein BT_1882 (130 aa).

Belongs to the UPF0102 family.

The polypeptide is UPF0102 protein BT_1882 (Bartonella tribocorum (strain CIP 105476 / IBS 506)).